Reading from the N-terminus, the 539-residue chain is Chaperonin GroEL 1 (539 aa).

ATP-binding positions include 29–32, 86–90, glycine 413, and aspartate 495; these read TLGP and DGTTT.

Belongs to the chaperonin (HSP60) family. As to quaternary structure, forms a cylinder of 14 subunits composed of two heptameric rings stacked back-to-back. Interacts with the co-chaperonin GroES.

Its subcellular location is the cytoplasm. It carries out the reaction ATP + H2O + a folded polypeptide = ADP + phosphate + an unfolded polypeptide.. Together with its co-chaperonin GroES, plays an essential role in assisting protein folding. The GroEL-GroES system forms a nano-cage that allows encapsulation of the non-native substrate proteins and provides a physical environment optimized to promote and accelerate protein folding. This is Chaperonin GroEL 1 from Mycobacterium bovis (strain ATCC BAA-935 / AF2122/97).